Here is a 352-residue protein sequence, read N- to C-terminus: Light dependent period A (352 aa).

4Fe-4S ferredoxin-type domains lie at 88–119 and 121–144; these read RRAWFDPDRCPTDCPRPCERVCPTDAITSTGV and RDRCYGCGRCLPICPLGLIEAQAW. Positions 97, 101, 105, 109, 124, 127, 130, and 134 each coordinate [4Fe-4S] cluster.

Interacts with KaiA, CikA and SasA; the complexes do not follow circadian rhythms. [4Fe-4S] cluster is required as a cofactor.

Its function is as follows. Functions in an input pathway to the Kai circadian clock. Probably senses the metabolic state of the cell via plastoquinone levels and informs the clock to modulate the photoperiod length. Deletion decreases the ability of the bacteria to modulate the circadian period in response to altered light regimes. Mild overexpression increases the photoperiod. Rapidly degraded in the presence of the quinone analog DBMIB (2,5-dibromo-3-methyl-6-isopropyl-p-benzoquinone), an artifical electron acceptor for photosystem II that reduces the plastoquinone pool. Partially resonsible for sensitivity of CikA to DBMIB, influences the levels of KaiA. This is Light dependent period A from Synechococcus elongatus (strain ATCC 33912 / PCC 7942 / FACHB-805) (Anacystis nidulans R2).